The chain runs to 173 residues: Crossover junction endodeoxyribonuclease RuvC (173 aa).

Residues D8, E67, and D139 contribute to the active site. Mg(2+) contacts are provided by D8, E67, and D139.

It belongs to the RuvC family. In terms of assembly, homodimer which binds Holliday junction (HJ) DNA. The HJ becomes 2-fold symmetrical on binding to RuvC with unstacked arms; it has a different conformation from HJ DNA in complex with RuvA. In the full resolvosome a probable DNA-RuvA(4)-RuvB(12)-RuvC(2) complex forms which resolves the HJ. Requires Mg(2+) as cofactor.

It localises to the cytoplasm. The catalysed reaction is Endonucleolytic cleavage at a junction such as a reciprocal single-stranded crossover between two homologous DNA duplexes (Holliday junction).. In terms of biological role, the RuvA-RuvB-RuvC complex processes Holliday junction (HJ) DNA during genetic recombination and DNA repair. Endonuclease that resolves HJ intermediates. Cleaves cruciform DNA by making single-stranded nicks across the HJ at symmetrical positions within the homologous arms, yielding a 5'-phosphate and a 3'-hydroxyl group; requires a central core of homology in the junction. The consensus cleavage sequence is 5'-(A/T)TT(C/G)-3'. Cleavage occurs on the 3'-side of the TT dinucleotide at the point of strand exchange. HJ branch migration catalyzed by RuvA-RuvB allows RuvC to scan DNA until it finds its consensus sequence, where it cleaves and resolves the cruciform DNA. The protein is Crossover junction endodeoxyribonuclease RuvC of Aeromonas salmonicida (strain A449).